The sequence spans 145 residues: Ribosomal RNA large subunit methyltransferase H (145 aa).

Residues L64, G93, and 112 to 117 (LSPLTF) contribute to the S-adenosyl-L-methionine site.

The protein belongs to the RNA methyltransferase RlmH family. As to quaternary structure, homodimer.

It is found in the cytoplasm. It carries out the reaction pseudouridine(1915) in 23S rRNA + S-adenosyl-L-methionine = N(3)-methylpseudouridine(1915) in 23S rRNA + S-adenosyl-L-homocysteine + H(+). In terms of biological role, specifically methylates the pseudouridine at position 1915 (m3Psi1915) in 23S rRNA. The sequence is that of Ribosomal RNA large subunit methyltransferase H from Prochlorococcus marinus (strain NATL1A).